The following is a 121-amino-acid chain: Ribosome-binding factor A (121 aa).

This sequence belongs to the RbfA family. As to quaternary structure, monomer. Binds 30S ribosomal subunits, but not 50S ribosomal subunits or 70S ribosomes.

It is found in the cytoplasm. One of several proteins that assist in the late maturation steps of the functional core of the 30S ribosomal subunit. Associates with free 30S ribosomal subunits (but not with 30S subunits that are part of 70S ribosomes or polysomes). Required for efficient processing of 16S rRNA. May interact with the 5'-terminal helix region of 16S rRNA. The protein is Ribosome-binding factor A of Agathobacter rectalis (strain ATCC 33656 / DSM 3377 / JCM 17463 / KCTC 5835 / VPI 0990) (Eubacterium rectale).